Here is a 314-residue protein sequence, read N- to C-terminus: 4-hydroxy-3-methylbut-2-enyl diphosphate reductase (314 aa).

Cysteine 12 contributes to the [4Fe-4S] cluster binding site. Histidine 41 and histidine 74 together coordinate (2E)-4-hydroxy-3-methylbut-2-enyl diphosphate. Residues histidine 41 and histidine 74 each contribute to the dimethylallyl diphosphate site. Residues histidine 41 and histidine 74 each contribute to the isopentenyl diphosphate site. Residue cysteine 96 participates in [4Fe-4S] cluster binding. Histidine 124 lines the (2E)-4-hydroxy-3-methylbut-2-enyl diphosphate pocket. Dimethylallyl diphosphate is bound at residue histidine 124. Residue histidine 124 coordinates isopentenyl diphosphate. Glutamate 126 (proton donor) is an active-site residue. Threonine 167 contributes to the (2E)-4-hydroxy-3-methylbut-2-enyl diphosphate binding site. Cysteine 197 provides a ligand contact to [4Fe-4S] cluster. Serine 225, serine 226, asparagine 227, and serine 269 together coordinate (2E)-4-hydroxy-3-methylbut-2-enyl diphosphate. The dimethylallyl diphosphate site is built by serine 225, serine 226, asparagine 227, and serine 269. Isopentenyl diphosphate is bound by residues serine 225, serine 226, asparagine 227, and serine 269.

It belongs to the IspH family. [4Fe-4S] cluster serves as cofactor.

The enzyme catalyses isopentenyl diphosphate + 2 oxidized [2Fe-2S]-[ferredoxin] + H2O = (2E)-4-hydroxy-3-methylbut-2-enyl diphosphate + 2 reduced [2Fe-2S]-[ferredoxin] + 2 H(+). It catalyses the reaction dimethylallyl diphosphate + 2 oxidized [2Fe-2S]-[ferredoxin] + H2O = (2E)-4-hydroxy-3-methylbut-2-enyl diphosphate + 2 reduced [2Fe-2S]-[ferredoxin] + 2 H(+). It functions in the pathway isoprenoid biosynthesis; dimethylallyl diphosphate biosynthesis; dimethylallyl diphosphate from (2E)-4-hydroxy-3-methylbutenyl diphosphate: step 1/1. It participates in isoprenoid biosynthesis; isopentenyl diphosphate biosynthesis via DXP pathway; isopentenyl diphosphate from 1-deoxy-D-xylulose 5-phosphate: step 6/6. In terms of biological role, catalyzes the conversion of 1-hydroxy-2-methyl-2-(E)-butenyl 4-diphosphate (HMBPP) into a mixture of isopentenyl diphosphate (IPP) and dimethylallyl diphosphate (DMAPP). Acts in the terminal step of the DOXP/MEP pathway for isoprenoid precursor biosynthesis. This is 4-hydroxy-3-methylbut-2-enyl diphosphate reductase from Aliivibrio fischeri (strain ATCC 700601 / ES114) (Vibrio fischeri).